Reading from the N-terminus, the 219-residue chain is ER lumen protein-retaining receptor (219 aa).

At 1 to 5 the chain is on the lumenal side; sequence MNPFR. The chain crosses the membrane as a helical span at residues 6-26; sequence ILGDLSHLTSILILIHNIKTT. Residues 27–37 are Cytoplasmic-facing; it reads RYIEGISFKTQ. Helical transmembrane passes span 38 to 58 and 59 to 79; these read TLYA…HWVS and LYNA…VVLL. Over 80–98 the chain is Cytoplasmic; the sequence is QGSKRTNTIAYNEMLMHDT. The helical transmembrane segment at 99–116 threads the bilayer; that stretch reads FKIQHLLIGSALMSVFFH. The Lumenal segment spans residues 117–118; that stretch reads HK. The helical transmembrane segment at 119 to 139 threads the bilayer; the sequence is FTFLELAWSFSVWLESVAILP. At 140 to 152 the chain is on the cytoplasmic side; that stretch reads QLYMLSKGGKTRS. Residues 153–173 traverse the membrane as a helical segment; it reads LTVHYIFAMGLYRALYIPNWI. The Lumenal portion of the chain corresponds to 174-185; the sequence is WRYSTEDKKLDK. The helical transmembrane segment at 186–206 threads the bilayer; sequence IAFFAGLLQTLLYSDFFYIYY. The Cytoplasmic portion of the chain corresponds to 207–219; the sequence is TKVIRGKGFKLPK.

It belongs to the ERD2 family.

It localises to the endoplasmic reticulum membrane. Its function is as follows. Required for the retention of luminal endoplasmic reticulum proteins. Determines the specificity of the luminal ER protein retention system. Also required for normal vesicular traffic through the Golgi. This receptor strongly recognizes H-D-E-L and weakly recognizes D-D-E-L and K-D-E-L. In Saccharomyces cerevisiae (strain ATCC 204508 / S288c) (Baker's yeast), this protein is ER lumen protein-retaining receptor.